Reading from the N-terminus, the 263-residue chain is 5'-nucleotidase SurE (263 aa).

A divalent metal cation is bound by residues aspartate 8, aspartate 9, serine 40, and asparagine 93.

The protein belongs to the SurE nucleotidase family. Requires a divalent metal cation as cofactor.

The protein resides in the cytoplasm. It carries out the reaction a ribonucleoside 5'-phosphate + H2O = a ribonucleoside + phosphate. Nucleotidase that shows phosphatase activity on nucleoside 5'-monophosphates. This is 5'-nucleotidase SurE from Beijerinckia indica subsp. indica (strain ATCC 9039 / DSM 1715 / NCIMB 8712).